A 435-amino-acid chain; its full sequence is Glucoside xylosyltransferase 1 (435 aa).

The Cytoplasmic segment spans residues 1–6 (MRRYLR). The chain crosses the membrane as a helical; Signal-anchor for type II membrane protein span at residues 7-29 (VVGLCLACGFCSLLYAFSQLAVS). Residues 30 to 435 (LEEGAAVGRR…NRYDTPPKER (406 aa)) lie on the Lumenal side of the membrane. N-linked (GlcNAc...) asparagine glycans are attached at residues Asn-168 and Asn-232.

It belongs to the glycosyltransferase 8 family.

Its subcellular location is the membrane. It catalyses the reaction 3-O-(beta-D-glucosyl)-L-seryl-[EGF-like domain protein] + UDP-alpha-D-xylose = 3-O-[alpha-D-xylosyl-(1-&gt;3)-beta-D-glucosyl]-L-seryl-[EGF-like domain protein] + UDP + H(+). Functionally, glycosyltransferase which elongates the O-linked glucose attached to EGF-like repeats in the extracellular domain of Notch proteins by catalyzing the addition of xylose. The polypeptide is Glucoside xylosyltransferase 1 (Gxylt1) (Rattus norvegicus (Rat)).